The chain runs to 67 residues: Phycobilisome 7.8 kDa linker polypeptide, allophycocyanin-associated, core (67 aa).

Residues methionine 1–alanine 56 form the CpcD-like domain.

The protein belongs to the phycobilisome linker protein family.

Its subcellular location is the cellular thylakoid membrane. Its function is as follows. Rod linker protein, associated with allophycocyanin. Linker polypeptides determine the state of aggregation and the location of the disk-shaped phycobiliprotein units within the phycobilisome and modulate their spectroscopic properties in order to mediate a directed and optimal energy transfer. The polypeptide is Phycobilisome 7.8 kDa linker polypeptide, allophycocyanin-associated, core (apcC) (Synechocystis sp. (strain PCC 6714) (Aphanocapsa sp. (strain PCC 6714))).